The sequence spans 387 residues: Phosphoglycerate kinase (387 aa).

Residues Asp-21 to Asn-23, Arg-36, His-59 to Arg-62, Arg-113, and Arg-146 each bind substrate. ATP is bound by residues Lys-197, Glu-314, and Gly-340–Thr-343.

It belongs to the phosphoglycerate kinase family. As to quaternary structure, monomer.

It is found in the cytoplasm. It carries out the reaction (2R)-3-phosphoglycerate + ATP = (2R)-3-phospho-glyceroyl phosphate + ADP. It functions in the pathway carbohydrate degradation; glycolysis; pyruvate from D-glyceraldehyde 3-phosphate: step 2/5. This chain is Phosphoglycerate kinase, found in Aliivibrio fischeri (strain MJ11) (Vibrio fischeri).